The primary structure comprises 327 residues: Phenylalanine--tRNA ligase alpha subunit (327 aa).

Mg(2+) is bound at residue glutamate 252.

It belongs to the class-II aminoacyl-tRNA synthetase family. Phe-tRNA synthetase alpha subunit type 1 subfamily. In terms of assembly, tetramer of two alpha and two beta subunits. Requires Mg(2+) as cofactor.

It localises to the cytoplasm. It catalyses the reaction tRNA(Phe) + L-phenylalanine + ATP = L-phenylalanyl-tRNA(Phe) + AMP + diphosphate + H(+). The chain is Phenylalanine--tRNA ligase alpha subunit from Glaesserella parasuis serovar 5 (strain SH0165) (Haemophilus parasuis).